Here is a 270-residue protein sequence, read N- to C-terminus: tRNA pseudouridine synthase A (270 aa).

The active-site Nucleophile is the Asp-52. Residue Tyr-110 coordinates substrate.

The protein belongs to the tRNA pseudouridine synthase TruA family. As to quaternary structure, homodimer.

It catalyses the reaction uridine(38/39/40) in tRNA = pseudouridine(38/39/40) in tRNA. Functionally, formation of pseudouridine at positions 38, 39 and 40 in the anticodon stem and loop of transfer RNAs. This Paraburkholderia phytofirmans (strain DSM 17436 / LMG 22146 / PsJN) (Burkholderia phytofirmans) protein is tRNA pseudouridine synthase A.